We begin with the raw amino-acid sequence, 409 residues long: Homoserine O-succinyltransferase (409 aa).

One can recognise an AB hydrolase-1 domain in the interval 43 to 380 (NAIVVCHALN…PHGHDAFLLD (338 aa)). The active-site Nucleophile is Ser-149. Substrate is bound at residue Arg-219. The interval 244-268 (TLPAARGSLPPEGTDPTRGGPASDR) is disordered. Active-site residues include Asp-341 and His-374. Position 375 (Asp-375) interacts with substrate.

It belongs to the AB hydrolase superfamily. MetX family. As to quaternary structure, homodimer.

Its subcellular location is the cytoplasm. It catalyses the reaction L-homoserine + succinyl-CoA = O-succinyl-L-homoserine + CoA. It participates in amino-acid biosynthesis; L-methionine biosynthesis via de novo pathway; O-succinyl-L-homoserine from L-homoserine: step 1/1. Transfers a succinyl group from succinyl-CoA to L-homoserine, forming succinyl-L-homoserine. The sequence is that of Homoserine O-succinyltransferase from Comamonas testosteroni (strain DSM 14576 / KF-1) (Pseudomonas testosteroni).